A 1280-amino-acid polypeptide reads, in one-letter code: E3 ubiquitin-protein ligase RKP (1280 aa).

The B30.2/SPRY domain occupies Lys82–Phe269. Residues Ser551–Leu571 traverse the membrane as a helical segment. A disordered region spans residues Asp669–Phe719. Residues Ala834 to Val854 traverse the membrane as a helical segment. The segment at Cys1217–Phe1252 adopts an RING-type zinc-finger fold.

It is found in the membrane. The catalysed reaction is S-ubiquitinyl-[E2 ubiquitin-conjugating enzyme]-L-cysteine + [acceptor protein]-L-lysine = [E2 ubiquitin-conjugating enzyme]-L-cysteine + N(6)-ubiquitinyl-[acceptor protein]-L-lysine.. Functionally, E3 ubiquitin-protein ligase that promotes the ubiquitination and proteasomal degradation of KRP1 and KRP2. The sequence is that of E3 ubiquitin-protein ligase RKP (RKP) from Arabidopsis thaliana (Mouse-ear cress).